A 930-amino-acid polypeptide reads, in one-letter code: Xanthan lyase (930 aa).

The N-terminal stretch at 1–25 is a signal peptide; the sequence is MLSGILIAALLMTLWGGWQPDIAHA. Xanthan contacts are provided by residues 146 to 148, H246, Y255, R309, 313 to 315, and N424; these read NWW and RSY. Y255 serves as the catalytic Proton donor/acceptor. D515, D516, and E517 together coordinate Ca(2+). R612 contributes to the xanthan binding site. Position 676 (E676) interacts with Ca(2+).

The protein belongs to the polysaccharide lyase 8 family. Monomer.

It localises to the secreted. It catalyses the reaction Eliminative cleavage of the terminal beta-D-mannosyl-(1-&gt;4)-beta-D-glucuronosyl linkage of the side-chain of the polysaccharide xanthan, leaving a 4-deoxy-alpha-L-threo-hex-4-enuronosyl group at the terminus of the side-chain.. Activated by Co(2+) at 1 mM. Completely inhibited by Hg(2+) but not affected by other divalent cations. Intensely inhibited by NaCl and KCl at 150 mM, in particular by the Na(+) and K(+) ions but not the Cl(-) ions. Partially inhibited by iodoacetamide and N-ethylmaleimide at 1 mM but not by dithiothreitol, reduced glutathione or 2-mercaptoethanol. In terms of biological role, plays a role in xanthan depolymerization pathway by cleaving the linkage between the terminal mannosyl and glucuronyl residues of the side chain of xanthan to liberate pyruvylated mannose. Is highly specific for pyruvylated side-chains of xanthan and is not effective with hyaluronate, chondroitin A, gellan, heparin or pectin. The protein is Xanthan lyase of Bacillus sp. (strain GL1).